The chain runs to 89 residues: Small ribosomal subunit protein uS17 (89 aa).

It belongs to the universal ribosomal protein uS17 family. As to quaternary structure, part of the 30S ribosomal subunit.

In terms of biological role, one of the primary rRNA binding proteins, it binds specifically to the 5'-end of 16S ribosomal RNA. The sequence is that of Small ribosomal subunit protein uS17 from Acidovorax ebreus (strain TPSY) (Diaphorobacter sp. (strain TPSY)).